A 114-amino-acid polypeptide reads, in one-letter code: Iron-sulfur cluster insertion protein ErpA (114 aa).

3 residues coordinate iron-sulfur cluster: cysteine 42, cysteine 106, and cysteine 108.

This sequence belongs to the HesB/IscA family. Homodimer. Iron-sulfur cluster is required as a cofactor.

Its function is as follows. Required for insertion of 4Fe-4S clusters for at least IspG. The protein is Iron-sulfur cluster insertion protein ErpA of Hamiltonella defensa subsp. Acyrthosiphon pisum (strain 5AT).